Here is a 64-residue protein sequence, read N- to C-terminus: Beta-toxin Tf1 (64 aa).

Residues 1-62 (KEGYLMDHEG…VWERATNRCG (62 aa)) enclose the LCN-type CS-alpha/beta domain. 4 cysteine pairs are disulfide-bonded: Cys-11–Cys-61, Cys-15–Cys-37, Cys-23–Cys-42, and Cys-27–Cys-44. Cys-61 is modified (cysteine amide).

It belongs to the long (4 C-C) scorpion toxin superfamily. Sodium channel inhibitor family. Beta subfamily. As to expression, expressed by the venom gland.

The protein resides in the secreted. Its function is as follows. Beta toxins bind voltage-independently at site-4 of sodium channels (Nav) and shift the voltage of activation toward more negative potentials thereby affecting sodium channel activation and promoting spontaneous and repetitive firing. In Tityus fasciolatus (Central Brazilian scorpion), this protein is Beta-toxin Tf1.